The chain runs to 606 residues: NADH-ubiquinone oxidoreductase chain 5 (606 aa).

16 consecutive transmembrane segments (helical) span residues 1–21 (MNLF…PIMV), 35–55 (YVKN…MMYL), 87–107 (LMFM…SMWY), 114–134 (INQF…LVTA), 140–160 (LFIG…WWFG), 171–191 (AILY…WFLS), 211–233 (FPLM…HPWL), 241–261 (TPVS…FLLV), 272–292 (LIQT…AICA), 301–320 (IIAF…IGLN), 325–347 (AFLH…GSII), 366–386 (LPFT…MPFL), 413–433 (LTAT…ALLG), 457–477 (LLIG…PVIT), 482–502 (MPLH…IIAF), and 582–602 (GLIK…MILF).

It belongs to the complex I subunit 5 family. In terms of assembly, core subunit of respiratory chain NADH dehydrogenase (Complex I) which is composed of 45 different subunits.

It is found in the mitochondrion inner membrane. The enzyme catalyses a ubiquinone + NADH + 5 H(+)(in) = a ubiquinol + NAD(+) + 4 H(+)(out). Functionally, core subunit of the mitochondrial membrane respiratory chain NADH dehydrogenase (Complex I) which catalyzes electron transfer from NADH through the respiratory chain, using ubiquinone as an electron acceptor. Essential for the catalytic activity and assembly of complex I. The chain is NADH-ubiquinone oxidoreductase chain 5 (MT-ND5) from Balaenoptera musculus (Blue whale).